We begin with the raw amino-acid sequence, 179 residues long: ATP synthase subunit delta 1 (179 aa).

Belongs to the ATPase delta chain family. F-type ATPases have 2 components, F(1) - the catalytic core - and F(0) - the membrane proton channel. F(1) has five subunits: alpha(3), beta(3), gamma(1), delta(1), epsilon(1). F(0) has three main subunits: a(1), b(2) and c(10-14). The alpha and beta chains form an alternating ring which encloses part of the gamma chain. F(1) is attached to F(0) by a central stalk formed by the gamma and epsilon chains, while a peripheral stalk is formed by the delta and b chains.

The protein localises to the cell inner membrane. Functionally, f(1)F(0) ATP synthase produces ATP from ADP in the presence of a proton or sodium gradient. F-type ATPases consist of two structural domains, F(1) containing the extramembraneous catalytic core and F(0) containing the membrane proton channel, linked together by a central stalk and a peripheral stalk. During catalysis, ATP synthesis in the catalytic domain of F(1) is coupled via a rotary mechanism of the central stalk subunits to proton translocation. Its function is as follows. This protein is part of the stalk that links CF(0) to CF(1). It either transmits conformational changes from CF(0) to CF(1) or is implicated in proton conduction. The protein is ATP synthase subunit delta 1 of Syntrophotalea carbinolica (strain DSM 2380 / NBRC 103641 / GraBd1) (Pelobacter carbinolicus).